A 407-amino-acid polypeptide reads, in one-letter code: E3 ubiquitin-protein ligase TRIM13 (407 aa).

The RING-type zinc finger occupies 10-58 (CPICCSLFDDPRVLPCSHNFCKKCLEGILEGNVRNSLWRSSPFKCPTCR). A B box-type zinc finger spans residues 89–131 (PKMPVCKGHLGQPLNIFCLTDMQLICGICATRGEHTKHVFCSI). 4 residues coordinate Zn(2+): Cys94, His97, Cys117, and His123. Residues 172–200 (LQLLTKDSDKVKEFFEKLQYTLDQKKNEI) adopt a coiled-coil conformation. A helical membrane pass occupies residues 316–336 (PLFVVVILLGLLIFFSPTMFL).

Interacts (via C-terminal domain) with VCP. Interacts with AKT1; the interaction ubiquitinates AKT1 and leads to its proteasomal degradation. Interacts with MDM2; the interaction ubiquitinates AKT1 and leads to its proteasomal degradation. Interacts with p62/SQSTM1. Interacts with TRAF6. Interacts with IKBKG/NEMO. In terms of processing, auto-ubiquitinated; requires the RING-type zinc finger. Auto-polyubiquitination leads to proteasomal degradation.

The protein localises to the endoplasmic reticulum membrane. It catalyses the reaction S-ubiquitinyl-[E2 ubiquitin-conjugating enzyme]-L-cysteine + [acceptor protein]-L-lysine = [E2 ubiquitin-conjugating enzyme]-L-cysteine + N(6)-ubiquitinyl-[acceptor protein]-L-lysine.. It functions in the pathway protein modification; protein ubiquitination. Its function is as follows. Endoplasmic reticulum (ER) membrane anchored E3 ligase involved in the retrotranslocation and turnover of membrane and secretory proteins from the ER through a set of processes named ER-associated degradation (ERAD). This process acts on misfolded proteins as well as in the regulated degradation of correctly folded proteins. Enhances ionizing radiation-induced p53/TP53 stability and apoptosis via ubiquitinating MDM2 and AKT1 and decreasing AKT1 kinase activity through MDM2 and AKT1 proteasomal degradation. Regulates ER stress-induced autophagy, and may act as a tumor suppressor. Also plays a role in innate immune response by stimulating NF-kappa-B activity in the TLR2 signaling pathway. Ubiquitinates TRAF6 via the 'Lys-29'-linked polyubiquitination chain resulting in NF-kappa-B activation. Participates as well in T-cell receptor-mediated NF-kappa-B activation. In the presence of TNF, modulates the IKK complex by regulating IKBKG/NEMO ubiquitination leading to the repression of NF-kappa-B. In Bos taurus (Bovine), this protein is E3 ubiquitin-protein ligase TRIM13 (TRIM13).